Here is a 130-residue protein sequence, read N- to C-terminus: Ribonuclease VapC4 (130 aa).

Residues 7-130 (LADTSVFIGI…AMPDVEVITI (124 aa)) form the PINc domain. Aspartate 9 and aspartate 98 together coordinate Mg(2+).

Belongs to the PINc/VapC protein family. As to quaternary structure, interacts with cognate antitoxin VapB4. Mg(2+) is required as a cofactor.

It localises to the secreted. Toxic component of a type II toxin-antitoxin (TA) system. Probably exerts its toxic effect by binding to mRNA, inhibiting translation. Binds to, recognizes and cleaves ssRNA at ACGC and AC(A/U)GC sequences, usually between the G and C; cleavage is not very efficient, nor is cleavage required to inhibit protein synthesis. Upon expression in situ, in M.smegmatis or E.coli inhibits cell growth and colony formation; in at least E.coli also causes increased levels of cellular RNA. Its toxic effect is neutralized by coexpression with cognate antitoxin VapB4. This is Ribonuclease VapC4 from Mycobacterium tuberculosis (strain ATCC 25618 / H37Rv).